The primary structure comprises 190 residues: Zinc metalloproteinase/disintegrin (190 aa).

The 11-residue stretch at Asn-1–Pro-11 folds into the Peptidase M12B domain. The Disintegrin domain occupies Pro-19–Asn-105. Residues Val-21, Asn-24, Leu-26, Glu-28, Glu-31, and Asp-34 each contribute to the Ca(2+) site. 6 disulfide bridges follow: Cys-33-Cys-51, Cys-35-Cys-46, Cys-45-Cys-68, Cys-59-Cys-65, Cys-64-Cys-90, and Cys-77-Cys-97. Residues Glu-83–Asp-85 carry the D/ECD-tripeptide motif. The Ca(2+) site is built by Asp-85, Pro-86, Glu-88, Asp-100, and Val-101. Positions Lys-104 to Cys-190 are excised as a propeptide.

It belongs to the venom metalloproteinase (M12B) family. P-III subfamily. In terms of assembly, monomer. It depends on Zn(2+) as a cofactor. In terms of tissue distribution, expressed by the venom gland.

It is found in the secreted. In terms of biological role, impairs hemostasis in the envenomed animal. Functionally, inhibits platelet aggregation induced by ADP, thrombin, platelet-activating factor and collagen. Acts by inhibiting fibrinogen interaction with platelet receptors GPIIb/GPIIIa (ITGA2B/ITGB3). The polypeptide is Zinc metalloproteinase/disintegrin (Gloydius brevicauda (Korean slamosa snake)).